The sequence spans 71 residues: Protein SlyX homolog (71 aa).

This sequence belongs to the SlyX family.

In Rhodopseudomonas palustris (strain BisB5), this protein is Protein SlyX homolog.